A 614-amino-acid chain; its full sequence is FAD-linked oxidoreductase ffsJ (614 aa).

The first 19 residues, 1-19 (MRLTRALTPAILALPAAHA), serve as a signal peptide directing secretion. 4 N-linked (GlcNAc...) asparagine glycosylation sites follow: N30, N53, N72, and N114. Residues 119-301 (TGSLPAYYID…LSSTHRVEPE (183 aa)) enclose the FAD-binding PCMH-type domain. Residues N314, N329, N461, N465, N478, and N514 are each glycosylated (N-linked (GlcNAc...) asparagine). Residues 453–495 (NGHGRSNNNNSNNSSTSTSTSTSSKNGSVKPYAYGGKETTSST) form a disordered region. Residues 456–480 (GRSNNNNSNNSSTSTSTSTSSKNGS) show a composition bias toward low complexity.

The protein belongs to the oxygen-dependent FAD-linked oxidoreductase family. It depends on FAD as a cofactor.

It participates in mycotoxin biosynthesis. Its function is as follows. FAD-linked oxidoreductase; part of the gene cluster that mediates the biosynthesis of the cytotoxic leucine-containing cytochalasans, including aspochalasin C, aspochalasin E, TMC-169, flavichalasine F, aspergillin PZ, aspochalasin M and flavichalasine G. The first step in the pathway is catalyzed by the hybrid PKS-NRPS ffsA that utilizes 8 units of malonyl-CoA to iteratively assemble the octaketide chain before addition of L-leucine by the C-terminal NRPS modules. Because ffsA lacks a designated enoylreductase (ER) domain, the required activity is provided the enoyl reductase fssC. The methyltransferase (MT) domain of ffsA catalyzes the alpha-methylation at C10 and C14 using S-adenosyl-L-methionine as the methyl-donating cosubstrate. Reduction by the hydrolyase ffsE, followed by dehydration and intra-molecular Diels-Alder cyclization by the Diels-Alderase ffsF then yield the required isoindolone-fused macrocycle. A number of oxidative steps catalyzed by the tailoring cytochrome P450 monooxygenase ffsD, the FAD-linked oxidoreductase ffsJ and the short-chain dehydrogenase/reductase ffsI, are further required to afford the final products. In Aspergillus flavipes, this protein is FAD-linked oxidoreductase ffsJ.